The sequence spans 447 residues: Tubulin beta chain (447 aa).

Glutamine 11, glutamate 69, serine 138, glycine 142, threonine 143, glycine 144, asparagine 204, and asparagine 226 together coordinate GTP. Glutamate 69 is a binding site for Mg(2+).

It belongs to the tubulin family. Dimer of alpha and beta chains. A typical microtubule is a hollow water-filled tube with an outer diameter of 25 nm and an inner diameter of 15 nM. Alpha-beta heterodimers associate head-to-tail to form protofilaments running lengthwise along the microtubule wall with the beta-tubulin subunit facing the microtubule plus end conferring a structural polarity. Microtubules usually have 13 protofilaments but different protofilament numbers can be found in some organisms and specialized cells. Mg(2+) is required as a cofactor.

The protein localises to the cytoplasm. The protein resides in the cytoskeleton. Tubulin is the major constituent of microtubules, a cylinder consisting of laterally associated linear protofilaments composed of alpha- and beta-tubulin heterodimers. Microtubules grow by the addition of GTP-tubulin dimers to the microtubule end, where a stabilizing cap forms. Below the cap, tubulin dimers are in GDP-bound state, owing to GTPase activity of alpha-tubulin. The protein is Tubulin beta chain of Trichophyton rubrum (Athlete's foot fungus).